Consider the following 395-residue polypeptide: S-adenosylmethionine synthase 5 (395 aa).

Mg(2+) is bound at residue Glu10. His16 is a binding site for ATP. K(+) is bound at residue Glu44. Residues Glu57 and Gln100 each contribute to the L-methionine site. Residues 168–170 (DGK), 236–239 (SGRF), Asp247, 253–254 (RK), Ala270, Lys274, and Lys278 contribute to the ATP site. L-methionine is bound at residue Asp247. Lys278 contacts L-methionine.

Belongs to the AdoMet synthase family. As to quaternary structure, homotetramer. Requires Mn(2+) as cofactor. Mg(2+) serves as cofactor. It depends on Co(2+) as a cofactor. The cofactor is K(+).

The protein localises to the cytoplasm. It carries out the reaction L-methionine + ATP + H2O = S-adenosyl-L-methionine + phosphate + diphosphate. It functions in the pathway amino-acid biosynthesis; S-adenosyl-L-methionine biosynthesis; S-adenosyl-L-methionine from L-methionine: step 1/1. Its function is as follows. Catalyzes the formation of S-adenosylmethionine from methionine and ATP. The reaction comprises two steps that are both catalyzed by the same enzyme: formation of S-adenosylmethionine (AdoMet) and triphosphate, and subsequent hydrolysis of the triphosphate. The sequence is that of S-adenosylmethionine synthase 5 (METK5) from Populus trichocarpa (Western balsam poplar).